Reading from the N-terminus, the 315-residue chain is Glycine--tRNA ligase alpha subunit (315 aa).

It belongs to the class-II aminoacyl-tRNA synthetase family. In terms of assembly, tetramer of two alpha and two beta subunits.

The protein localises to the cytoplasm. The enzyme catalyses tRNA(Gly) + glycine + ATP = glycyl-tRNA(Gly) + AMP + diphosphate. The polypeptide is Glycine--tRNA ligase alpha subunit (Pseudomonas putida (strain W619)).